The sequence spans 297 residues: Bifunctional protein FolD 1 (297 aa).

NADP(+) is bound by residues 174–176 (GRS), serine 199, and isoleucine 240.

Belongs to the tetrahydrofolate dehydrogenase/cyclohydrolase family. In terms of assembly, homodimer.

The enzyme catalyses (6R)-5,10-methylene-5,6,7,8-tetrahydrofolate + NADP(+) = (6R)-5,10-methenyltetrahydrofolate + NADPH. The catalysed reaction is (6R)-5,10-methenyltetrahydrofolate + H2O = (6R)-10-formyltetrahydrofolate + H(+). It participates in one-carbon metabolism; tetrahydrofolate interconversion. Functionally, catalyzes the oxidation of 5,10-methylenetetrahydrofolate to 5,10-methenyltetrahydrofolate and then the hydrolysis of 5,10-methenyltetrahydrofolate to 10-formyltetrahydrofolate. This chain is Bifunctional protein FolD 1, found in Acinetobacter baylyi (strain ATCC 33305 / BD413 / ADP1).